Reading from the N-terminus, the 265-residue chain is MSDILNTILARKADEVAERSARVPLAELIARSADLPLTRGFAAAMQASIAAGDPAVIAEVKKASPSKGVIRPDFHPADIAVSYEFGGATCLSVLTDVDFFQGSDAYLRQARDACTLPVLRKDFTVDPYQVYEARVLGADCILLIVSALKDAQLADLSGLAMQLGLDVLVEVHDVDELERAVQVPVPLIGINNRNLRTFEVTLQTTLDMRAAVPRDRVLVTESGIVTQADVQLMRSNDVNAFLVGETFMRAAEPGESLRQLFFAHD.

It belongs to the TrpC family.

The enzyme catalyses 1-(2-carboxyphenylamino)-1-deoxy-D-ribulose 5-phosphate + H(+) = (1S,2R)-1-C-(indol-3-yl)glycerol 3-phosphate + CO2 + H2O. The protein operates within amino-acid biosynthesis; L-tryptophan biosynthesis; L-tryptophan from chorismate: step 4/5. The chain is Indole-3-glycerol phosphate synthase from Xanthomonas oryzae pv. oryzae (strain MAFF 311018).